The primary structure comprises 378 residues: Probable E3 ubiquitin-protein ligase LUL3 (378 aa).

Basic residues predominate over residues 1-21 (MGISLSKRRRDNNNNHHHPHH). Positions 1–79 (MGISLSKRRR…PPSQISYRPY (79 aa)) are disordered. Gly2 is lipidated: N-myristoyl glycine. Composition is skewed to pro residues over residues 29–38 (DPPPQQPPPQ) and 55–72 (SLPP…PPPS). Positions 164–283 (FVFDALFDGS…GSFKVKVMKQ (120 aa)) are DAR2 domain. The RING-type; atypical zinc finger occupies 321–360 (CVICLTEPKDTAVMPCRHLCLCSDCAEELRFQTNKCPICR).

This sequence belongs to the RING-type zinc finger family. LOG2 subfamily. In terms of processing, myristoylated (in vitro).

It carries out the reaction S-ubiquitinyl-[E2 ubiquitin-conjugating enzyme]-L-cysteine + [acceptor protein]-L-lysine = [E2 ubiquitin-conjugating enzyme]-L-cysteine + N(6)-ubiquitinyl-[acceptor protein]-L-lysine.. It functions in the pathway protein modification; protein ubiquitination. In terms of biological role, acts as an E3 ubiquitin-protein ligase, or as part of E3 complex, which accepts ubiquitin from specific E2 ubiquitin-conjugating enzymes and then transfers it to substrates (in vitro). This chain is Probable E3 ubiquitin-protein ligase LUL3 (LUL3), found in Arabidopsis thaliana (Mouse-ear cress).